Consider the following 42-residue polypeptide: Potassium channel toxin gamma-KTx 1.3 (42 aa).

Intrachain disulfides connect Cys-5/Cys-23, Cys-11/Cys-34, Cys-20/Cys-39, and Cys-24/Cys-41.

Belongs to the ergtoxin family. Gamma-KTx 1 subfamily. As to expression, expressed by the venom gland.

The protein resides in the secreted. Blocks Kv11/ERG potassium channels. This chain is Potassium channel toxin gamma-KTx 1.3, found in Centruroides gracilis (Slenderbrown scorpion).